Consider the following 410-residue polypeptide: TNF receptor-associated factor family protein DDB_G0279745 (410 aa).

The RING-type; degenerate zinc finger occupies C27–R67. 2 TRAF-type zinc fingers span residues Y81 to Q154 and Q154 to I213. Residues L216–A284 are a coiled coil.

Belongs to the TNF receptor-associated factor family.

It is found in the cytoplasm. Functionally, probable adapter protein and signal transducer that links members of the tumor necrosis factor receptor family to different signaling pathways by association with the receptor cytoplasmic domain and kinases. The polypeptide is TNF receptor-associated factor family protein DDB_G0279745 (Dictyostelium discoideum (Social amoeba)).